We begin with the raw amino-acid sequence, 209 residues long: Na(+)-translocating NADH-quinone reductase subunit D (209 aa).

Transmembrane regions (helical) follow at residues 42 to 62 (LVMT…ISLI), 66 to 86 (IPNS…VIVV), 103 to 123 (VFVG…AYAM), 131 to 151 (FMDG…VGFV), and 178 to 198 (NGLF…IWGL).

The protein belongs to the NqrDE/RnfAE family. In terms of assembly, composed of six subunits; NqrA, NqrB, NqrC, NqrD, NqrE and NqrF.

The protein resides in the cell inner membrane. It carries out the reaction a ubiquinone + n Na(+)(in) + NADH + H(+) = a ubiquinol + n Na(+)(out) + NAD(+). In terms of biological role, NQR complex catalyzes the reduction of ubiquinone-1 to ubiquinol by two successive reactions, coupled with the transport of Na(+) ions from the cytoplasm to the periplasm. NqrA to NqrE are probably involved in the second step, the conversion of ubisemiquinone to ubiquinol. The polypeptide is Na(+)-translocating NADH-quinone reductase subunit D (Yersinia pseudotuberculosis serotype O:1b (strain IP 31758)).